The sequence spans 159 residues: NADH-quinone oxidoreductase subunit I (159 aa).

2 4Fe-4S ferredoxin-type domains span residues 51-80 and 90-119; these read RRYENGEERCIACKLCEAICPAQAIVIEAD and TRYDIDMTKCIYCGLCQEACPVDAIVEGPN. [4Fe-4S] cluster is bound by residues C60, C63, C66, C70, C99, C102, C105, and C109.

It belongs to the complex I 23 kDa subunit family. As to quaternary structure, NDH-1 is composed of 14 different subunits. Subunits NuoA, H, J, K, L, M, N constitute the membrane sector of the complex. Requires [4Fe-4S] cluster as cofactor.

The protein localises to the cell inner membrane. The catalysed reaction is a quinone + NADH + 5 H(+)(in) = a quinol + NAD(+) + 4 H(+)(out). In terms of biological role, NDH-1 shuttles electrons from NADH, via FMN and iron-sulfur (Fe-S) centers, to quinones in the respiratory chain. The immediate electron acceptor for the enzyme in this species is believed to be ubiquinone. Couples the redox reaction to proton translocation (for every two electrons transferred, four hydrogen ions are translocated across the cytoplasmic membrane), and thus conserves the redox energy in a proton gradient. The sequence is that of NADH-quinone oxidoreductase subunit I from Rickettsia peacockii (strain Rustic).